A 444-amino-acid polypeptide reads, in one-letter code: Tryptophan 5-hydroxylase 1 (444 aa).

The region spanning 19-94 is the ACT domain; sequence SLIFSLKNEV…NVLSVNLPDN (76 aa). Position 58 is a phosphoserine; by PKA (serine 58). L-tryptophan-binding residues include tyrosine 235, arginine 257, and threonine 265. 3 residues coordinate Fe cation: histidine 272, histidine 277, and glutamate 317. Residues serine 336 and isoleucine 366 each contribute to the L-tryptophan site.

Belongs to the biopterin-dependent aromatic amino acid hydroxylase family. As to quaternary structure, homotetramer. Interacts with DNAJC12. Fe(2+) serves as cofactor. Ubiquitinated, leading to its degradation by the proteasome. Ubiquitinated is triggered by phosphorylation. In terms of processing, phosphorylated; triggering degradation by the proteasome. Seems to be less widely expressed than isoform 1.

It carries out the reaction (6R)-L-erythro-5,6,7,8-tetrahydrobiopterin + L-tryptophan + O2 = 5-hydroxy-L-tryptophan + (4aS,6R)-4a-hydroxy-L-erythro-5,6,7,8-tetrahydrobiopterin. It functions in the pathway aromatic compound metabolism; serotonin biosynthesis; serotonin from L-tryptophan: step 1/2. Functionally, oxidizes L-tryptophan to 5-hydroxy-l-tryptophan in the rate-determining step of serotonin biosynthesis. The chain is Tryptophan 5-hydroxylase 1 (TPH1) from Homo sapiens (Human).